The chain runs to 122 residues: NADH-quinone oxidoreductase subunit A (122 aa).

3 helical membrane passes run 10 to 30 (MIVLIFLLLGILLPVVALTLG), 66 to 86 (IFALLFVIFDVETLFLYPWAV), and 91 to 111 (LGLFALIEMLIFVVMLLVGLA).

This sequence belongs to the complex I subunit 3 family. NDH-1 is composed of 14 different subunits. Subunits NuoA, H, J, K, L, M, N constitute the membrane sector of the complex.

It is found in the cell membrane. It carries out the reaction a quinone + NADH + 5 H(+)(in) = a quinol + NAD(+) + 4 H(+)(out). Functionally, NDH-1 shuttles electrons from NADH, via FMN and iron-sulfur (Fe-S) centers, to quinones in the respiratory chain. The immediate electron acceptor for the enzyme in this species is believed to be a menaquinone. Couples the redox reaction to proton translocation (for every two electrons transferred, four hydrogen ions are translocated across the cytoplasmic membrane), and thus conserves the redox energy in a proton gradient. In Bacillus thuringiensis subsp. konkukian (strain 97-27), this protein is NADH-quinone oxidoreductase subunit A.